The chain runs to 105 residues: Thioredoxin (105 aa).

The region spanning 2-105 (VKLIESKEAF…KLEASITEYA (104 aa)) is the Thioredoxin domain. Lys3 bears the N6-acetyllysine mark. Residue Lys8 is modified to N6-succinyllysine. Active-site nucleophile residues include Cys32 and Cys35. Cysteines 32 and 35 form a disulfide. Lys39 carries the post-translational modification N6-acetyllysine. 2 positions are modified to S-nitrosocysteine: Cys62 and Cys69. Cys73 carries the post-translational modification S-nitrosocysteine; alternate. The residue at position 94 (Lys94) is an N6-acetyllysine; alternate. Position 94 is an N6-succinyllysine; alternate (Lys94).

Belongs to the thioredoxin family. In terms of assembly, homodimer; disulfide-linked. Interacts with TXNIP through the redox-active site. Interacts with MAP3K5 and CASP3. Interacts with APEX1; the interaction stimulates the FOS/JUN AP-1 DNA-binding activity in a redox-dependent manner. In the fully reduced protein, both Cys-69 and Cys-73 are nitrosylated in response to nitric oxide (NO). When two disulfide bonds are present in the protein, only Cys-73 is nitrosylated. Cys-73 can serve as donor for nitrosylation of target proteins.

The protein resides in the nucleus. Its subcellular location is the cytoplasm. It localises to the secreted. Functionally, participates in various redox reactions through the reversible oxidation of its active center dithiol to a disulfide and catalyzes dithiol-disulfide exchange reactions. Plays a role in the reversible S-nitrosylation of cysteine residues in target proteins, and thereby contributes to the response to intracellular nitric oxide. Nitrosylates the active site Cys of CASP3 in response to nitric oxide (NO), and thereby inhibits caspase-3 activity. Induces the FOS/JUN AP-1 DNA binding activity in ionizing radiation (IR) cells through its oxidation/reduction status and stimulates AP-1 transcriptional activity. ADF augments the expression of the interleukin-2 receptor TAC (IL2R/P55). This chain is Thioredoxin (Txn), found in Mus musculus (Mouse).